The sequence spans 581 residues: Laccase-2 (581 aa).

The first 19 residues, 1 to 19 (MKYSTVFTALTALFAQASA), serve as a signal peptide directing secretion. Plastocyanin-like domains are found at residues 74–191 (SVEN…GPAT) and 197–353 (DVGA…YDSS). 3 N-linked (GlcNAc...) asparagine glycosylation sites follow: Asn-77, Asn-93, and Asn-120. 4 residues coordinate Cu cation: His-125, His-127, His-169, and His-171. Cys-146 and Cys-562 are oxidised to a cystine. N-linked (GlcNAc...) asparagine glycans are attached at residues Asn-232, Asn-283, Asn-343, Asn-408, Asn-427, and Asn-441. In terms of domain architecture, Plastocyanin-like 3 spans 413–547 (LLDWSSPTTL…AMQFVESQSS (135 aa)). Residues His-464, His-467, His-469, His-526, Cys-527, His-528, and His-532 each coordinate Cu cation.

The protein belongs to the multicopper oxidase family. The cofactor is Cu cation.

The protein localises to the secreted. The catalysed reaction is 4 hydroquinone + O2 = 4 benzosemiquinone + 2 H2O. Functionally, lignin degradation and detoxification of lignin-derived products. The sequence is that of Laccase-2 (lcc2) from Botryotinia fuckeliana (Noble rot fungus).